We begin with the raw amino-acid sequence, 156 residues long: Small ribosomal subunit protein uS7c (156 aa).

This sequence belongs to the universal ribosomal protein uS7 family. As to quaternary structure, part of the 30S ribosomal subunit.

It is found in the plastid. Its subcellular location is the chloroplast. In terms of biological role, one of the primary rRNA binding proteins, it binds directly to 16S rRNA where it nucleates assembly of the head domain of the 30S subunit. In Euglena gracilis, this protein is Small ribosomal subunit protein uS7c (rps7).